A 336-amino-acid chain; its full sequence is Phospho-N-acetylmuramoyl-pentapeptide-transferase (336 aa).

A run of 10 helical transmembrane segments spans residues 3-23, 53-73, 78-98, 118-138, 143-163, 174-194, 200-220, 226-246, 254-274, and 316-336; these read LTLI…PYFI, GGTV…LFSI, SLAL…IGFL, LALQ…PSGI, VFGY…FWVV, GIDG…GVIA, FDVL…FCFN, VFMG…ISIA, LIIG…VFYF, and AFLW…LYVF.

It belongs to the glycosyltransferase 4 family. MraY subfamily. The cofactor is Mg(2+).

The protein localises to the cell membrane. The catalysed reaction is UDP-N-acetyl-alpha-D-muramoyl-L-alanyl-gamma-D-glutamyl-L-lysyl-D-alanyl-D-alanine + di-trans,octa-cis-undecaprenyl phosphate = Mur2Ac(oyl-L-Ala-gamma-D-Glu-L-Lys-D-Ala-D-Ala)-di-trans,octa-cis-undecaprenyl diphosphate + UMP. It functions in the pathway cell wall biogenesis; peptidoglycan biosynthesis. Functionally, catalyzes the initial step of the lipid cycle reactions in the biosynthesis of the cell wall peptidoglycan: transfers peptidoglycan precursor phospho-MurNAc-pentapeptide from UDP-MurNAc-pentapeptide onto the lipid carrier undecaprenyl phosphate, yielding undecaprenyl-pyrophosphoryl-MurNAc-pentapeptide, known as lipid I. This is Phospho-N-acetylmuramoyl-pentapeptide-transferase from Streptococcus pyogenes serotype M18 (strain MGAS8232).